An 837-amino-acid polypeptide reads, in one-letter code: Ubiquitin carboxyl-terminal hydrolase A (837 aa).

Residues 166-277 form a UBP-type; degenerate zinc finger; the sequence is PSAFAESIIQ…QHLTHWGLNP (112 aa). The region spanning 319–835 is the USP domain; that stretch reads TGIENLGNSC…LGYIYFYKRQ (517 aa). Catalysis depends on cysteine 328, which acts as the Nucleophile. The 42-residue stretch at 628 to 669 folds into the UBA 1 domain; the sequence is SFNQEVLDTLLSMDFPLVRCKKALLATGGKDAELAMNWIFEH. The interval 676–695 is disordered; that stretch reads DIEQTPVNNNNNNNNSSNSN. Positions 683-695 are enriched in low complexity; the sequence is NNNNNNNNSSNSN. The 41-residue stretch at 700 to 740 folds into the UBA 2 domain; it reads VFNSQDVDNIIGMGFTDSQAKLALKNTKGNLERAADWLFSH. The active-site Proton acceptor is histidine 797.

Belongs to the peptidase C19 family.

It catalyses the reaction Thiol-dependent hydrolysis of ester, thioester, amide, peptide and isopeptide bonds formed by the C-terminal Gly of ubiquitin (a 76-residue protein attached to proteins as an intracellular targeting signal).. Functionally, required for development but not growth. The sequence is that of Ubiquitin carboxyl-terminal hydrolase A (ubpA) from Dictyostelium discoideum (Social amoeba).